Here is a 567-residue protein sequence, read N- to C-terminus: D-lactate dehydrogenase [cytochrome], mitochondrial (567 aa).

Residues 1 to 56 (MAFASKFARSKTILSFLRPCRQLHSTPKSTGDVTVLSPVKGRRRLPTCWSSSLFPL) constitute a mitochondrion transit peptide. The FAD-binding PCMH-type domain maps to 142–319 (AVNIPDVVVF…TEITLRLQKI (178 aa)).

The protein belongs to the FAD-binding oxidoreductase/transferase type 4 family. Homodimer. FAD serves as cofactor. In terms of tissue distribution, expressed in leaves, stems, flowers and roots.

It localises to the mitochondrion. The enzyme catalyses (R)-lactate + 2 Fe(III)-[cytochrome c] = 2 Fe(II)-[cytochrome c] + pyruvate + 2 H(+). Its activity is regulated as follows. Inhibited by cyanide ions. In terms of biological role, catalyzes the stereospecific oxidation of D-lactate to pyruvate. Involved in the detoxification of methylglyoxal and D-lactate, but probably not involved in the metabolization of glycolate. The protein is D-lactate dehydrogenase [cytochrome], mitochondrial of Arabidopsis thaliana (Mouse-ear cress).